The primary structure comprises 342 residues: S-adenosylmethionine:tRNA ribosyltransferase-isomerase (342 aa).

This sequence belongs to the QueA family. As to quaternary structure, monomer.

The protein localises to the cytoplasm. It carries out the reaction 7-aminomethyl-7-carbaguanosine(34) in tRNA + S-adenosyl-L-methionine = epoxyqueuosine(34) in tRNA + adenine + L-methionine + 2 H(+). Its pathway is tRNA modification; tRNA-queuosine biosynthesis. In terms of biological role, transfers and isomerizes the ribose moiety from AdoMet to the 7-aminomethyl group of 7-deazaguanine (preQ1-tRNA) to give epoxyqueuosine (oQ-tRNA). In Streptococcus pneumoniae serotype 19F (strain G54), this protein is S-adenosylmethionine:tRNA ribosyltransferase-isomerase.